Consider the following 910-residue polypeptide: Ubiquitin carboxyl-terminal hydrolase 9 (910 aa).

In terms of domain architecture, DUSP spans 19-134; it reads TTPEEEKRIV…GGPPIERKLI (116 aa). Residues 68–89 form a disordered region; sequence ISGESSEASRPGPIDNHDIIES. The 592-residue stretch at 303 to 894 folds into the USP domain; the sequence is AGLSNLGNTC…AAYVLFYRRV (592 aa). C312 (nucleophile) is an active-site residue. The Proton acceptor role is filled by H852.

This sequence belongs to the peptidase C19 family.

It carries out the reaction Thiol-dependent hydrolysis of ester, thioester, amide, peptide and isopeptide bonds formed by the C-terminal Gly of ubiquitin (a 76-residue protein attached to proteins as an intracellular targeting signal).. Recognizes and hydrolyzes the peptide bond at the C-terminal Gly of ubiquitin. Involved in the processing of poly-ubiquitin precursors as well as that of ubiquitinated proteins. The polypeptide is Ubiquitin carboxyl-terminal hydrolase 9 (UBP9) (Arabidopsis thaliana (Mouse-ear cress)).